Here is a 237-residue protein sequence, read N- to C-terminus: Sugar fermentation stimulation protein homolog (237 aa).

It belongs to the SfsA family.

In Actinobacillus pleuropneumoniae serotype 5b (strain L20), this protein is Sugar fermentation stimulation protein homolog.